The sequence spans 332 residues: MMKKPVVIGLAVVVLAAVVAGGYWWYQSRQDNGLTLYGNVDIRTVNLSFRVGGRVESLAVDEGDAIKAGQVLGELDHKPYEIALMQAKAGVSVAQAQYDLMLAGYRDEEIAQAAAAVKQAQAAYDYAQNFYNRQQGLWKSRTISANDLENARSSRDQAQATLKSAQDKLRQYRSGNREQDIAQAKASLEQAQAQLAQAELNLQDSTLVAPSDGTLLTRAVEPGTVLNEGGTVFTVSLTRPVWVRAYVDERNLDQAQPGRKVLLYTDGRPNKPYHGQIGFVSPTAEFTPKTVETPDLRTDLVYRLRIVVTDADDALRQGMPVTVQFGDEAGHE.

Residues 1–16 form the signal peptide; it reads MMKKPVVIGLAVVVLA. A coiled-coil region spans residues 108–211; sequence EEIAQAAAAV…LQDSTLVAPS (104 aa).

This sequence belongs to the UPF0194 family.

Its subcellular location is the periplasm. The protein is UPF0194 membrane protein YbhG of Escherichia coli O6:H1 (strain CFT073 / ATCC 700928 / UPEC).